Reading from the N-terminus, the 155-residue chain is Effector protein PevD1 (155 aa).

Residues 1 to 18 form the signal peptide; that stretch reads MQFTLAAAAALFGASALA. In terms of domain architecture, AA1-like spans 33 to 148; that stretch reads NMYENIDIAD…NPTTIVIDSL (116 aa). Cystine bridges form between Cys70–Cys84 and Cys125–Cys135.

In terms of assembly, monomer. Interacts with Arabidopsis thaliana NRP.

The protein localises to the secreted. In terms of biological role, effector protein. Elicits a hypersensitive response (HR) in tobacco plants (N.tabacum) and cotton (G.hirsutum). Boosts systemic acquired resistance (SAR) to tobacco mosaic virus (TMV) infection in N.tabacum and to V.dhaliae infection in primed cotton seedlings. In Verticillium dahliae (Verticillium wilt), this protein is Effector protein PevD1.